Here is a 2313-residue protein sequence, read N- to C-terminus: Histone-lysine N-methyltransferase Set2 (2313 aa).

Disordered stretches follow at residues 1-115 (MEES…ASTS), 179-442 (AVGG…EETF), 550-858 (EPPL…LKAK), 883-1106 (RLDE…KKAL), 1118-1150 (ETES…PFGD), and 1163-1251 (KRDK…SQGR). The a.T hook 1 DNA-binding region spans 17 to 29 (GRGRGRPPKVALS). Residues 73–82 (IKFDVRDLLN) show a composition bias toward basic and acidic residues. Residues 101–115 (STGHSQSGTTAASTS) are compositionally biased toward low complexity. The a.T hook 2 DNA-binding region spans 197–209 (PRKRGRPRKSQLA). Residues 221–241 (SCSDSDTNSTSTTTSNMSSDS) are compositionally biased toward low complexity. Residues 252 to 265 (PKSKLRVSLKRLKL) show a composition bias toward basic residues. Positions 266–288 (GGRLESSDSGNSPSSSSPEVEPP) are enriched in low complexity. Residues 330–345 (ESPKGEEEQEEGRPVE) show a composition bias toward basic and acidic residues. Composition is skewed to acidic residues over residues 347–356 (EPQDLIDIDM), 365–375 (PDPEEDLDEIM), and 388–398 (ADDEAEEEEDA). Thr-404 carries the phosphothreonine modification. The span at 412 to 433 (ADSCSSAPRRSRRSAPLSGSSR) shows a compositional bias: low complexity. A compositionally biased stretch (basic and acidic residues) spans 552–563 (PLKDESDPKQTE). Positions 659–671 (EDYESNQEQVAED) are enriched in acidic residues. A compositionally biased stretch (polar residues) spans 676–685 (CNNQKGQKQT). Basic and acidic residues-rich tracts occupy residues 689–708 (EMKE…EKAM), 719–732 (VDKK…EKKV), 740–749 (VPEKKMDSKK), and 758–782 (KQKE…KSSA). Residues Ser-786 and Ser-788 each carry the phosphoserine modification. 3 stretches are compositionally biased toward polar residues: residues 800–833 (AQWS…SNQP), 918–928 (KSLSGKTSLRR), and 938–955 (LERN…NTSA). A compositionally biased stretch (basic residues) spans 959 to 969 (KPSKVKKKINP). Residues 997–1010 (SSPVSTSSDSSSKR) show a composition bias toward low complexity. Positions 1016 to 1039 (TTSDLDGGSKLDQRRYTICEDRQP) are enriched in basic and acidic residues. Composition is skewed to low complexity over residues 1085–1097 (SRQN…SSAS) and 1118–1127 (ETESSESTSS). A compositionally biased stretch (basic and acidic residues) spans 1163 to 1183 (KRDKVDEDQRKEGQDEVKREA). Over residues 1199-1213 (TPATTPTPSPTQSNP) the composition is skewed to low complexity. In terms of domain architecture, AWS spans 1307-1360 (NAEMQCDCFLTGDEEAQGHLSCGAGCINRMLMIECGPLCSNGARCTNKRFQQHQ). Positions 1312, 1314, 1328, 1332, 1341, 1345, and 1351 each coordinate Zn(2+). One can recognise an SET domain in the interval 1362–1479 (WPCRVFRTEK…PGEEITFDYQ (118 aa)). Residues 1415–1417 (HYY) and 1440–1441 (NH) contribute to the S-adenosyl-L-methionine site. Residue Cys-1443 coordinates Zn(2+). The Post-SET domain occupies 1486–1502 (DAQRCYCEAANCRGWIG). Gln-1488 is a binding site for S-adenosyl-L-methionine. Residue Cys-1490 coordinates Zn(2+). S-adenosyl-L-methionine is bound at residue Tyr-1491. Residues Cys-1492 and Cys-1497 each coordinate Zn(2+). Disordered regions lie at residues 1501-1598 (IGGE…KPKV) and 1763-1860 (MKEH…RRTL). Residues 1505–1534 (PDSDEGEQLDEESDSDAEMDEEELEAEPEE) show a composition bias toward acidic residues. The segment covering 1539 to 1551 (KSAKAKAKSKLKA) has biased composition (basic residues). Basic and acidic residues-rich tracts occupy residues 1564–1574 (QTKPKDREYKA), 1763–1774 (MKEHEREADRQQ), and 1784–1806 (EDQR…RDTT). The segment covering 1817-1832 (SGNNTICTITTQQKGS) has biased composition (polar residues). The segment covering 1840 to 1860 (TRNDNRRRSDIGPPSEQRRTL) has biased composition (basic and acidic residues). Residues 1963 to 1996 (DPLPPAWNWQVTSDGDIYYYNLRERISQWEPPSP) enclose the WW domain. 2 positions are modified to phosphoserine: Ser-2130 and Ser-2131. Positions 2177-2218 (LGTVGKRKLPMPPSVTVKKHRQEQRSKKVKSSQSPLTATSAR) are disordered. Positions 2193–2206 (VKKHRQEQRSKKVK) are enriched in basic residues. The segment covering 2207–2216 (SSQSPLTATS) has biased composition (polar residues).

This sequence belongs to the class V-like SAM-binding methyltransferase superfamily. Histone-lysine methyltransferase family. SET2 subfamily. In terms of assembly, interacts with (phosphorylated) Polr2A.

The protein resides in the nucleus. It localises to the chromosome. The enzyme catalyses L-lysyl(36)-[histone H3] + 3 S-adenosyl-L-methionine = N(6),N(6),N(6)-trimethyl-L-lysyl(36)-[histone H3] + 3 S-adenosyl-L-homocysteine + 3 H(+). In terms of biological role, histone methyltransferase that specifically trimethylates 'Lys-36' of histone H3 (H3K36me3). Represents the main enzyme generating H3K36me3, a specific tag for epigenetic transcriptional activation. Involved in dosage compensation in males (X chromosome dosage compensation) by mediating formation of H3K36me3, a mark recognized by msl-3 component of the MSL complex. In addition to its role in dosage compensation in males, promotes germline stem cell differentiation in females: catalyzes formation of H3K36me3, promoting recruitment of msl-3 and subsequent recruitment of the ATAC complex, leading to transcription of genes, such as RpS19b. This is Histone-lysine N-methyltransferase Set2 from Drosophila melanogaster (Fruit fly).